The primary structure comprises 165 residues: Myosin regulatory light chain 2A, cardiac muscle isoform (165 aa).

Ala2 is modified (n,N,N-trimethylalanine). EF-hand domains follow at residues 24–59 (AQIQ…LGRL), 94–128 (DPEE…QEGR), and 129–164 (FSQE…GEEK). Positions 37, 39, 41, and 48 each coordinate Ca(2+).

As to quaternary structure, myosin is a hexamer of 2 heavy chains and 4 light chains. In terms of processing, the N-terminus is blocked. N,N,N-trimethylalanine, found in other myosin light chains would not have been detected in the N-terminal tryptic peptide in PubMed:7319048 because it would remain trimethylated and ninhydrin negative after hydrolysis.

The protein is Myosin regulatory light chain 2A, cardiac muscle isoform of Gallus gallus (Chicken).